Consider the following 214-residue polypeptide: Phosphoenolpyruvate guanylyltransferase (214 aa).

Phosphoenolpyruvate is bound by residues Thr139, Gly155, and Ser158.

This sequence belongs to the CofC family.

The enzyme catalyses phosphoenolpyruvate + GTP + H(+) = enolpyruvoyl-2-diphospho-5'-guanosine + diphosphate. The protein operates within cofactor biosynthesis; coenzyme F420 biosynthesis. Guanylyltransferase that catalyzes the activation of phosphoenolpyruvate (PEP) as enolpyruvoyl-2-diphospho-5'-guanosine, via the condensation of PEP with GTP. It is involved in the biosynthesis of coenzyme F420, a hydride carrier cofactor. This is Phosphoenolpyruvate guanylyltransferase from Salinispora arenicola (strain CNS-205).